Here is a 192-residue protein sequence, read N- to C-terminus: dTTP/UTP pyrophosphatase (192 aa).

Catalysis depends on Asp-70, which acts as the Proton acceptor.

The protein belongs to the Maf family. YhdE subfamily. It depends on a divalent metal cation as a cofactor.

It localises to the cytoplasm. The enzyme catalyses dTTP + H2O = dTMP + diphosphate + H(+). It catalyses the reaction UTP + H2O = UMP + diphosphate + H(+). Nucleoside triphosphate pyrophosphatase that hydrolyzes dTTP and UTP. May have a dual role in cell division arrest and in preventing the incorporation of modified nucleotides into cellular nucleic acids. This is dTTP/UTP pyrophosphatase from Clostridium perfringens (strain ATCC 13124 / DSM 756 / JCM 1290 / NCIMB 6125 / NCTC 8237 / Type A).